The sequence spans 29 residues: Potassium-transporting ATPase KdpF subunit (29 aa).

A helical transmembrane segment spans residues Leu-2–Val-22.

This sequence belongs to the KdpF family. The system is composed of three essential subunits: KdpA, KdpB and KdpC. The complex also contains KdpF, a small non-essential subunit.

The protein localises to the cell membrane. Part of the high-affinity ATP-driven potassium transport (or Kdp) system, which catalyzes the hydrolysis of ATP coupled with the electrogenic transport of potassium into the cytoplasm. This subunit may be involved in stabilization of the complex. The Kdp system is essential for growth under K(+) limitation, and for survival under desiccation and salt crystal inclusion. In Halobacterium salinarum (strain ATCC 29341 / DSM 671 / R1), this protein is Potassium-transporting ATPase KdpF subunit.